Reading from the N-terminus, the 201-residue chain is MTELTTPIYPLQRNWSWWFLNDDRNASWQDRLKKVYTFNTVPEFWAFYEAILPPSGLNDLCDYNVFRDDIQPKWEAPENWDGGRWLIIINKGKTPEVLDAVWLEILLALIGEQFGKDMESICGLVCNVRGQGSKISVWTKNCNDDDTNMRIGVVLKEKLMAAASKAHSKPLFDVIHYQTHRNCVKKTTSALKYKFSLKSIV.

A disulfide bridge connects residues Cys122 and Cys126.

The protein belongs to the eukaryotic initiation factor 4E family. In terms of assembly, eIF4F is a multi-subunit complex, the composition of which varies with external and internal environmental conditions. It is composed of at least eIF4A, eIF4E and eIF4G. eIF4E is also known to interact with other partners. As to expression, enriched in the germline.

Functionally, recognizes and binds the 7-methylguanosine-containing mRNA cap during an early step in the initiation of protein synthesis and facilitates ribosome binding by inducing the unwinding of the mRNAs secondary structures. All 5 eIF4E proteins bind monomethyl cap structures. Only ife-1, ife-2 and ife-5 bind trimethyl cap structures which result from trans-splicing. Translation of trimethyl cap structure mRNAs may be regulated by intracellular redox state; disulfide bonds change the width and depth of the cap-binding cavity determining selectivity to mRNA caps. This chain is Eukaryotic translation initiation factor 4E-5 (ife-5), found in Caenorhabditis elegans.